The following is a 182-amino-acid chain: Ribosome maturation factor RimM (182 aa).

Residues 102-182 (EEGDYYWKDL…TIEVDWDPGF (81 aa)) enclose the PRC barrel domain.

Belongs to the RimM family. In terms of assembly, binds ribosomal protein uS19.

The protein localises to the cytoplasm. Functionally, an accessory protein needed during the final step in the assembly of 30S ribosomal subunit, possibly for assembly of the head region. Essential for efficient processing of 16S rRNA. May be needed both before and after RbfA during the maturation of 16S rRNA. It has affinity for free ribosomal 30S subunits but not for 70S ribosomes. This chain is Ribosome maturation factor RimM, found in Salmonella enteritidis PT4 (strain P125109).